A 278-amino-acid polypeptide reads, in one-letter code: Acetyl-coenzyme A carboxylase carboxyl transferase subunit beta (278 aa).

Residues 23-278 enclose the CoA carboxyltransferase N-terminal domain; the sequence is LWSKCDSCGA…QLIKLLGHMK (256 aa). Zn(2+) is bound by residues cysteine 27, cysteine 30, cysteine 46, and cysteine 49. A C4-type zinc finger spans residues 27 to 49; the sequence is CDSCGAALHKKQLEDHLYTCPHC.

This sequence belongs to the AccD/PCCB family. Acetyl-CoA carboxylase is a heterohexamer composed of biotin carboxyl carrier protein (AccB), biotin carboxylase (AccC) and two subunits each of ACCase subunit alpha (AccA) and ACCase subunit beta (AccD). Requires Zn(2+) as cofactor.

It is found in the cytoplasm. It catalyses the reaction N(6)-carboxybiotinyl-L-lysyl-[protein] + acetyl-CoA = N(6)-biotinyl-L-lysyl-[protein] + malonyl-CoA. The protein operates within lipid metabolism; malonyl-CoA biosynthesis; malonyl-CoA from acetyl-CoA: step 1/1. Functionally, component of the acetyl coenzyme A carboxylase (ACC) complex. Biotin carboxylase (BC) catalyzes the carboxylation of biotin on its carrier protein (BCCP) and then the CO(2) group is transferred by the transcarboxylase to acetyl-CoA to form malonyl-CoA. In Chlorobaculum tepidum (strain ATCC 49652 / DSM 12025 / NBRC 103806 / TLS) (Chlorobium tepidum), this protein is Acetyl-coenzyme A carboxylase carboxyl transferase subunit beta.